Reading from the N-terminus, the 171-residue chain is 3-hydroxydecanoyl-[acyl-carrier-protein] dehydratase (171 aa).

The active site involves histidine 70.

It belongs to the thioester dehydratase family. FabA subfamily. In terms of assembly, homodimer.

Its subcellular location is the cytoplasm. It catalyses the reaction a (3R)-hydroxyacyl-[ACP] = a (2E)-enoyl-[ACP] + H2O. The enzyme catalyses (3R)-hydroxydecanoyl-[ACP] = (2E)-decenoyl-[ACP] + H2O. It carries out the reaction (2E)-decenoyl-[ACP] = (3Z)-decenoyl-[ACP]. The protein operates within lipid metabolism; fatty acid biosynthesis. In terms of biological role, necessary for the introduction of cis unsaturation into fatty acids. Catalyzes the dehydration of (3R)-3-hydroxydecanoyl-ACP to E-(2)-decenoyl-ACP and then its isomerization to Z-(3)-decenoyl-ACP. Can catalyze the dehydratase reaction for beta-hydroxyacyl-ACPs with saturated chain lengths up to 16:0, being most active on intermediate chain length. The chain is 3-hydroxydecanoyl-[acyl-carrier-protein] dehydratase from Shewanella halifaxensis (strain HAW-EB4).